A 165-amino-acid chain; its full sequence is Crossover junction endodeoxyribonuclease RuvC (165 aa).

Catalysis depends on residues aspartate 8, glutamate 69, and histidine 141. 3 residues coordinate Mg(2+): aspartate 8, glutamate 69, and histidine 141.

The protein belongs to the RuvC family. Homodimer which binds Holliday junction (HJ) DNA. The HJ becomes 2-fold symmetrical on binding to RuvC with unstacked arms; it has a different conformation from HJ DNA in complex with RuvA. In the full resolvosome a probable DNA-RuvA(4)-RuvB(12)-RuvC(2) complex forms which resolves the HJ. Mg(2+) is required as a cofactor.

The protein resides in the cytoplasm. It carries out the reaction Endonucleolytic cleavage at a junction such as a reciprocal single-stranded crossover between two homologous DNA duplexes (Holliday junction).. In terms of biological role, the RuvA-RuvB-RuvC complex processes Holliday junction (HJ) DNA during genetic recombination and DNA repair. Endonuclease that resolves HJ intermediates. Cleaves cruciform DNA by making single-stranded nicks across the HJ at symmetrical positions within the homologous arms, yielding a 5'-phosphate and a 3'-hydroxyl group; requires a central core of homology in the junction. The consensus cleavage sequence is 5'-(A/T)TT(C/G)-3'. Cleavage occurs on the 3'-side of the TT dinucleotide at the point of strand exchange. HJ branch migration catalyzed by RuvA-RuvB allows RuvC to scan DNA until it finds its consensus sequence, where it cleaves and resolves the cruciform DNA. The polypeptide is Crossover junction endodeoxyribonuclease RuvC (Wolbachia pipientis subsp. Culex pipiens (strain wPip)).